A 147-amino-acid polypeptide reads, in one-letter code: MALRACGLIIFRRRLIPKVDNTAIEFLLLQASDGIHHWTPPKGHVEPGESDLETALRETQEEAGIEAGQLTIIEGFRRELSYVARAKPKIVIYWLAEVKDCDVEVRLSREHQAYRWLELEDACQLAQFEEMKAALQEGHQFLCSTAT.

N-acetylalanine is present on alanine 2. In terms of domain architecture, Nudix hydrolase spans 2 to 139; it reads ALRACGLIIF…EMKAALQEGH (138 aa). The Nudix box signature appears at 43-64; the sequence is GHVEPGESDLETALRETQEEAG.

It belongs to the Nudix hydrolase family. Requires a divalent metal cation as cofactor.

It catalyses the reaction P(1),P(4)-bis(5'-guanosyl) tetraphosphate + H2O = GMP + GTP + 2 H(+). The enzyme catalyses a 5'-end CoA-ribonucleoside in mRNA + H2O = a 5'-end phospho-adenosine-phospho-ribonucleoside in mRNA + (R)-4'-phosphopantetheine + 2 H(+). The catalysed reaction is a 5'-end FAD-phospho-ribonucleoside in mRNA + H2O = a 5'-end phospho-adenosine-phospho-ribonucleoside in mRNA + FMN + 2 H(+). Its function is as follows. Catalyzes the asymmetric hydrolysis of diadenosine 5',5'''-P1,P4-tetraphosphate (Ap4A) to yield AMP and ATP. Exhibits decapping activity towards FAD-capped RNAs and dpCoA-capped RNAs in vitro. The protein is Bis(5'-nucleosyl)-tetraphosphatase [asymmetrical] (NUDT2) of Bos taurus (Bovine).